Here is a 75-residue protein sequence, read N- to C-terminus: Putative antitoxin VapB17 (75 aa).

Putative antitoxin component of a possible type II toxin-antitoxin (TA) system. The cognate toxin is VapC17. In Mycobacterium tuberculosis (strain CDC 1551 / Oshkosh), this protein is Putative antitoxin VapB17 (vapB17).